The sequence spans 74 residues: Consomatin Gh1 (74 aa).

Residues 1–22 form the signal peptide; it reads MQTACWVMVMMMVWITAPLSEG. A propeptide spanning residues 23–57 is cleaved from the precursor; it reads GKLNDVIRGLVPDDVTPQLILRSLFFHRPSDSVVR. An intrachain disulfide couples Cys-65 to Cys-70. Trp-67 carries the post-translational modification D-tryptophan. Residues Pro-71, Pro-72, and Pro-74 each carry the 4-hydroxyproline modification.

It belongs to the conotoxin C superfamily. Consomatin family. Expressed by the venom duct.

The protein localises to the secreted. Its function is as follows. Moderately activates human somatostatin receptors (SSTR) with a preferential activation of SSTR1 and SSTR4. In vivo, does not cause behavioral changes in mice within a few minutes of intracranial injection, but causes a progressive loss of movement thereafter. Four to five hours after injection, mice recover, even with the highest dose tested. Shows antinociception and antihyperalgesia activities in two mouse models of acute pain, most probably by acting outside the central nervous system. This is Consomatin Gh1 from Conus grahami (Cone snail).